Here is a 276-residue protein sequence, read N- to C-terminus: NH(3)-dependent NAD(+) synthetase (276 aa).

43–50 lines the ATP pocket; the sequence is GISGGVDS. Aspartate 49 is a binding site for Mg(2+). Arginine 146 is a deamido-NAD(+) binding site. Threonine 166 contributes to the ATP binding site. Mg(2+) is bound at residue glutamate 171. Lysine 179 and aspartate 186 together coordinate deamido-NAD(+). ATP is bound by residues lysine 195 and threonine 217. Residue 266 to 267 coordinates deamido-NAD(+); it reads HK.

The protein belongs to the NAD synthetase family. As to quaternary structure, homodimer.

The catalysed reaction is deamido-NAD(+) + NH4(+) + ATP = AMP + diphosphate + NAD(+) + H(+). It functions in the pathway cofactor biosynthesis; NAD(+) biosynthesis; NAD(+) from deamido-NAD(+) (ammonia route): step 1/1. Functionally, catalyzes the ATP-dependent amidation of deamido-NAD to form NAD. Uses ammonia as a nitrogen source. In Aliivibrio fischeri (strain ATCC 700601 / ES114) (Vibrio fischeri), this protein is NH(3)-dependent NAD(+) synthetase.